The primary structure comprises 295 residues: 4-hydroxy-tetrahydrodipicolinate synthase (295 aa).

Threonine 47 serves as a coordination point for pyruvate. Tyrosine 135 functions as the Proton donor/acceptor in the catalytic mechanism. Lysine 163 functions as the Schiff-base intermediate with substrate in the catalytic mechanism. Residue isoleucine 206 coordinates pyruvate.

The protein belongs to the DapA family. In terms of assembly, homodimer.

The protein localises to the cytoplasm. It catalyses the reaction L-aspartate 4-semialdehyde + pyruvate = (2S,4S)-4-hydroxy-2,3,4,5-tetrahydrodipicolinate + H2O + H(+). Its pathway is amino-acid biosynthesis; L-lysine biosynthesis via DAP pathway; (S)-tetrahydrodipicolinate from L-aspartate: step 3/4. Its function is as follows. Catalyzes the condensation of (S)-aspartate-beta-semialdehyde [(S)-ASA] and pyruvate to 4-hydroxy-tetrahydrodipicolinate (HTPA). The polypeptide is 4-hydroxy-tetrahydrodipicolinate synthase (Staphylococcus saprophyticus subsp. saprophyticus (strain ATCC 15305 / DSM 20229 / NCIMB 8711 / NCTC 7292 / S-41)).